The sequence spans 173 residues: Adenine phosphoribosyltransferase (173 aa).

Belongs to the purine/pyrimidine phosphoribosyltransferase family. Homodimer.

It is found in the cytoplasm. It carries out the reaction AMP + diphosphate = 5-phospho-alpha-D-ribose 1-diphosphate + adenine. The protein operates within purine metabolism; AMP biosynthesis via salvage pathway; AMP from adenine: step 1/1. Its function is as follows. Catalyzes a salvage reaction resulting in the formation of AMP, that is energically less costly than de novo synthesis. This Ureaplasma parvum serovar 3 (strain ATCC 27815 / 27 / NCTC 11736) protein is Adenine phosphoribosyltransferase.